The primary structure comprises 635 residues: MNPSPLLDLIDSPQDLRRLDKKQLPRLAGELRTFLLESVGQTGGHFASNLGAVELTIALHYVYDTPEDKLVWDVGHQSYPHKILTGRKNQMHTMRQYGGLAGFPKRCESEYDAFGVGHSSTSIGAALGMAAADKLLGSDRRSVAIIGDGAMTAGQAFEALNCAGDMDVDLLVVLNDNEMSISPNVGALPKYLASNVVRDMHGLLSTVKAQTGKVLDKIPGAMEFAQKVEHKIKTLAEEAEHAKQSLSLFENFGFRYTGPVDGHNVENLVDVLKDLRSRKGPQLLHVITKKGNGYKLAENDPVKYHAVANLPKESAAQMPSENKPAAKPTYTQVFGKWLCDRAAADSRLVAITPAMREGSGLVEFEQRFPDRYFDVGIAEQHAVTFAGGLACEGMKPVVAIYSTFLQRAYDQLVHDIALQNLPVLFAVDRAGIVGADGPTHAGLYDLSFLRCIPNMIVAAPSDENECRLLLSTCYQADAPAAVRYPRGTGTGVPVSDGMETVEIGKGIIRREGEKTAFIAFGSMVAPALAVAEKLNATVADMRFVKPIDEELIVRLARSHDRIVTLEENAEQGGAGGAVLEVLAKHGICKPVLLLGVADTVTGHGDPKKLLDDLGLSAEAVERRVRAWLSDRDAAN.

Thiamine diphosphate-binding positions include His76 and 117 to 119 (GHS). Asp148 contacts Mg(2+). Residues 149 to 150 (GA), Asn177, Tyr294, and Glu379 contribute to the thiamine diphosphate site. Residue Asn177 participates in Mg(2+) binding.

The protein belongs to the transketolase family. DXPS subfamily. In terms of assembly, homodimer. The cofactor is Mg(2+). It depends on thiamine diphosphate as a cofactor.

It carries out the reaction D-glyceraldehyde 3-phosphate + pyruvate + H(+) = 1-deoxy-D-xylulose 5-phosphate + CO2. The protein operates within metabolic intermediate biosynthesis; 1-deoxy-D-xylulose 5-phosphate biosynthesis; 1-deoxy-D-xylulose 5-phosphate from D-glyceraldehyde 3-phosphate and pyruvate: step 1/1. Catalyzes the acyloin condensation reaction between C atoms 2 and 3 of pyruvate and glyceraldehyde 3-phosphate to yield 1-deoxy-D-xylulose-5-phosphate (DXP). This Neisseria meningitidis serogroup C (strain 053442) protein is 1-deoxy-D-xylulose-5-phosphate synthase.